Consider the following 250-residue polypeptide: 7-carboxy-7-deazaguanine synthase (250 aa).

Substrate-binding positions include 15–17 (VQG) and arginine 30. A Radical SAM core domain is found at 21–250 (LIGLRQVFIR…PQTHRFMGQL (230 aa)). Cysteine 34, cysteine 38, and cysteine 41 together coordinate [4Fe-4S] cluster. A Mg(2+)-binding site is contributed by threonine 43. Threonine 96 provides a ligand contact to substrate. Glycine 98 serves as a coordination point for S-adenosyl-L-methionine.

This sequence belongs to the radical SAM superfamily. 7-carboxy-7-deazaguanine synthase family. In terms of assembly, homodimer. The cofactor is [4Fe-4S] cluster. It depends on S-adenosyl-L-methionine as a cofactor. Mg(2+) is required as a cofactor.

The catalysed reaction is 6-carboxy-5,6,7,8-tetrahydropterin + H(+) = 7-carboxy-7-deazaguanine + NH4(+). Its pathway is purine metabolism; 7-cyano-7-deazaguanine biosynthesis. Its function is as follows. Catalyzes the complex heterocyclic radical-mediated conversion of 6-carboxy-5,6,7,8-tetrahydropterin (CPH4) to 7-carboxy-7-deazaguanine (CDG), a step common to the biosynthetic pathways of all 7-deazapurine-containing compounds. The polypeptide is 7-carboxy-7-deazaguanine synthase (Geobacter sulfurreducens (strain ATCC 51573 / DSM 12127 / PCA)).